We begin with the raw amino-acid sequence, 135 residues long: MSEFKRLMRLKLKMKQKRPEFKRQDSHRFQRIGTMWRRPTGHHSGQRIQVTYRLSPVKIGFRGPALVRGLHPSGLEDIIVNNVKQLAALNPKTQGARIASAVGTRKRIEIVKKANELGIRVFNVSKQKQGEFLSL.

It belongs to the eukaryotic ribosomal protein eL32 family.

The sequence is that of Large ribosomal subunit protein eL32 (rpl32e) from Methanococcus vannielii.